The following is a 289-amino-acid chain: Phosphatidylserine decarboxylase proenzyme (289 aa).

Residues D89, H146, and S252 each act as charge relay system; for autoendoproteolytic cleavage activity in the active site. Catalysis depends on S252, which acts as the Schiff-base intermediate with substrate; via pyruvic acid; for decarboxylase activity. The residue at position 252 (S252) is a Pyruvic acid (Ser); by autocatalysis.

This sequence belongs to the phosphatidylserine decarboxylase family. PSD-B subfamily. Prokaryotic type I sub-subfamily. As to quaternary structure, heterodimer of a large membrane-associated beta subunit and a small pyruvoyl-containing alpha subunit. The cofactor is pyruvate. Is synthesized initially as an inactive proenzyme. Formation of the active enzyme involves a self-maturation process in which the active site pyruvoyl group is generated from an internal serine residue via an autocatalytic post-translational modification. Two non-identical subunits are generated from the proenzyme in this reaction, and the pyruvate is formed at the N-terminus of the alpha chain, which is derived from the carboxyl end of the proenzyme. The autoendoproteolytic cleavage occurs by a canonical serine protease mechanism, in which the side chain hydroxyl group of the serine supplies its oxygen atom to form the C-terminus of the beta chain, while the remainder of the serine residue undergoes an oxidative deamination to produce ammonia and the pyruvoyl prosthetic group on the alpha chain. During this reaction, the Ser that is part of the protease active site of the proenzyme becomes the pyruvoyl prosthetic group, which constitutes an essential element of the active site of the mature decarboxylase.

Its subcellular location is the cell membrane. The catalysed reaction is a 1,2-diacyl-sn-glycero-3-phospho-L-serine + H(+) = a 1,2-diacyl-sn-glycero-3-phosphoethanolamine + CO2. It participates in phospholipid metabolism; phosphatidylethanolamine biosynthesis; phosphatidylethanolamine from CDP-diacylglycerol: step 2/2. Functionally, catalyzes the formation of phosphatidylethanolamine (PtdEtn) from phosphatidylserine (PtdSer). The chain is Phosphatidylserine decarboxylase proenzyme from Shewanella denitrificans (strain OS217 / ATCC BAA-1090 / DSM 15013).